Reading from the N-terminus, the 364-residue chain is Inner membrane ABC transporter permease protein YejB (364 aa).

At M1 to R8 the chain is on the periplasmic side. A helical transmembrane segment spans residues L9–I29. Residues A30–Q37 lie on the Cytoplasmic side of the membrane. A helical membrane pass occupies residues A38 to V58. The Periplasmic portion of the chain corresponds to R59–V135. Residues L133–S348 enclose the ABC transmembrane type-1 domain. A helical transmembrane segment spans residues S136–I156. Residues R157 to A172 lie on the Cytoplasmic side of the membrane. The chain crosses the membrane as a helical span at residues F173–F193. Topologically, residues A194–Y224 are periplasmic. The helical transmembrane segment at L225 to M245 threads the bilayer. Topologically, residues L246–L284 are cytoplasmic. A helical transmembrane segment spans residues L285–I305. The Periplasmic portion of the chain corresponds to E306–D326. Residues Y327–V347 traverse the membrane as a helical segment. The Cytoplasmic portion of the chain corresponds to S348 to R364.

Belongs to the binding-protein-dependent transport system permease family. OppBC subfamily.

The protein resides in the cell inner membrane. Its function is as follows. Probably part of a binding-protein-dependent transport system. Probably responsible for the translocation of the substrate across the membrane. The sequence is that of Inner membrane ABC transporter permease protein YejB (yejB) from Escherichia coli O157:H7.